The following is a 279-amino-acid chain: Phage-like element PBSX protein XepA (279 aa).

To B.subtilis YqxG/YqdC.

Not known; does not seem to be involved in host cell lysis. In Bacillus subtilis (strain 168), this protein is Phage-like element PBSX protein XepA (xepA).